Consider the following 415-residue polypeptide: Gamma-glutamyl phosphate reductase (415 aa).

The protein belongs to the gamma-glutamyl phosphate reductase family.

Its subcellular location is the cytoplasm. The enzyme catalyses L-glutamate 5-semialdehyde + phosphate + NADP(+) = L-glutamyl 5-phosphate + NADPH + H(+). It functions in the pathway amino-acid biosynthesis; L-proline biosynthesis; L-glutamate 5-semialdehyde from L-glutamate: step 2/2. Functionally, catalyzes the NADPH-dependent reduction of L-glutamate 5-phosphate into L-glutamate 5-semialdehyde and phosphate. The product spontaneously undergoes cyclization to form 1-pyrroline-5-carboxylate. This chain is Gamma-glutamyl phosphate reductase, found in Bacillus cereus (strain B4264).